The chain runs to 985 residues: DNA ligase 4 (985 aa).

Disordered regions lie at residues 1–27 and 43–70; these read MDRL…RNKH and LNGN…QTLS. Positions 10–20 are enriched in basic and acidic residues; sequence ETERELDEKYP. Residues 46–61 are compositionally biased toward basic residues; that stretch reads NKKRPTGPAAARKKLG. 10 residues coordinate ATP: E310, K312, L313, R317, E379, F420, E480, K485, K502, and K504. Catalysis depends on K312, which acts as the N6-AMP-lysine intermediate. E379 serves as a coordination point for Mg(2+). E480 provides a ligand contact to Mg(2+). BRCT domains follow at residues 711 to 804 and 878 to 983; these read PSGH…PDLL and LRGW…RFAP.

This sequence belongs to the ATP-dependent DNA ligase family. It depends on Mg(2+) as a cofactor.

It is found in the nucleus. It carries out the reaction ATP + (deoxyribonucleotide)n-3'-hydroxyl + 5'-phospho-(deoxyribonucleotide)m = (deoxyribonucleotide)n+m + AMP + diphosphate.. Functionally, DNA ligase involved in DNA non-homologous end joining (NHEJ); required for double-strand break (DSB) repair. This chain is DNA ligase 4 (LIG4), found in Coccidioides immitis (strain RS) (Valley fever fungus).